The following is a 929-amino-acid chain: Bifunctional glutamine synthetase adenylyltransferase/adenylyl-removing enzyme (929 aa).

The segment at 1–423 (MSTPIDSSRA…RHFEQIFAAR (423 aa)) is adenylyl removase. Positions 433 to 929 (ARIRPEQSGD…FQLWEDIFGT (497 aa)) are adenylyl transferase.

It belongs to the GlnE family. Mg(2+) is required as a cofactor.

The enzyme catalyses [glutamine synthetase]-O(4)-(5'-adenylyl)-L-tyrosine + phosphate = [glutamine synthetase]-L-tyrosine + ADP. The catalysed reaction is [glutamine synthetase]-L-tyrosine + ATP = [glutamine synthetase]-O(4)-(5'-adenylyl)-L-tyrosine + diphosphate. Functionally, involved in the regulation of glutamine synthetase GlnA, a key enzyme in the process to assimilate ammonia. When cellular nitrogen levels are high, the C-terminal adenylyl transferase (AT) inactivates GlnA by covalent transfer of an adenylyl group from ATP to specific tyrosine residue of GlnA, thus reducing its activity. Conversely, when nitrogen levels are low, the N-terminal adenylyl removase (AR) activates GlnA by removing the adenylyl group by phosphorolysis, increasing its activity. The regulatory region of GlnE binds the signal transduction protein PII (GlnB) which indicates the nitrogen status of the cell. This Nitrosomonas europaea (strain ATCC 19718 / CIP 103999 / KCTC 2705 / NBRC 14298) protein is Bifunctional glutamine synthetase adenylyltransferase/adenylyl-removing enzyme.